We begin with the raw amino-acid sequence, 869 residues long: Bifunctional uridylyltransferase/uridylyl-removing enzyme (869 aa).

Positions 1–332 (MTDAPAERPD…QFDGEATPES (332 aa)) are uridylyltransferase. Residues 333–691 (LGGGFSLRRG…RRAVPDNDAL (359 aa)) are uridylyl-removing. Residues 450–572 (VDQHTLMVLR…VGTRERLDYL (123 aa)) enclose the HD domain. ACT domains are found at residues 692–774 (EVFV…RAVP) and 798–869 (RISL…LDPV).

It belongs to the GlnD family. The cofactor is Mg(2+).

The catalysed reaction is [protein-PII]-L-tyrosine + UTP = [protein-PII]-uridylyl-L-tyrosine + diphosphate. It carries out the reaction [protein-PII]-uridylyl-L-tyrosine + H2O = [protein-PII]-L-tyrosine + UMP + H(+). With respect to regulation, uridylyltransferase (UTase) activity is inhibited by glutamine, while glutamine activates uridylyl-removing (UR) activity. In terms of biological role, modifies, by uridylylation and deuridylylation, the PII regulatory proteins (GlnB and homologs), in response to the nitrogen status of the cell that GlnD senses through the glutamine level. Under low glutamine levels, catalyzes the conversion of the PII proteins and UTP to PII-UMP and PPi, while under higher glutamine levels, GlnD hydrolyzes PII-UMP to PII and UMP (deuridylylation). Thus, controls uridylylation state and activity of the PII proteins, and plays an important role in the regulation of nitrogen assimilation and metabolism. The protein is Bifunctional uridylyltransferase/uridylyl-removing enzyme of Xanthomonas oryzae pv. oryzae (strain MAFF 311018).